Here is a 298-residue protein sequence, read N- to C-terminus: Probable mitochondrial 2-oxodicarboxylate carrier (298 aa).

6 helical membrane-spanning segments follow: residues 6-26 (IPFP…VLTL), 62-81 (HRLY…KRAL), 105-125 (ALSI…VVPF), 159-179 (ALYN…AGYF), 203-223 (LIAG…FDVI), and 267-287 (VLRL…VIEF). Solcar repeat units lie at residues 6-92 (IPFP…YSKL), 102-188 (SSPA…IRNS), and 197-287 (GEIR…VIEF).

It belongs to the mitochondrial carrier (TC 2.A.29) family.

Its subcellular location is the mitochondrion inner membrane. In terms of biological role, transports C5-C7 oxodicarboxylates across the inner membranes of mitochondria. The protein is Probable mitochondrial 2-oxodicarboxylate carrier of Schizosaccharomyces pombe (strain 972 / ATCC 24843) (Fission yeast).